We begin with the raw amino-acid sequence, 251 residues long: Cytochrome c oxidase subunit 2 (251 aa).

The first 15 residues, 1–15, serve as a signal peptide directing secretion; the sequence is MLTFLSNLNNMIIMN. Over 16-42 the chain is Mitochondrial intermembrane; it reads DVPTPYGVYFQDSATPNQEGILELHDN. The helical transmembrane segment at 43–64 threads the bilayer; it reads IMFYLLVILGLVSWLLFTITRT. Residues 65–82 are Mitochondrial matrix-facing; sequence YSKNPIAYKYIKHGQTIE. The chain crosses the membrane as a helical span at residues 83-107; it reads IIWTIFPAVVLLIIAFPSFILLYLC. The Mitochondrial intermembrane portion of the chain corresponds to 108–251; it reads DEVISPAMTI…PSFLEWLNEQ (144 aa). The Cu cation site is built by H186, C221, E223, C225, H229, and M232. Residue E223 participates in Mg(2+) binding.

Belongs to the cytochrome c oxidase subunit 2 family. In terms of assembly, component of the cytochrome c oxidase (complex IV, CIV), a multisubunit enzyme composed of a catalytic core of 3 subunits and several supernumerary subunits. The complex exists as a monomer or a dimer and forms supercomplexes (SCs) in the inner mitochondrial membrane with ubiquinol-cytochrome c oxidoreductase (cytochrome b-c1 complex, complex III, CIII). The cofactor is Cu cation. Post-translationally, the signal sequence of COX2 is processed by IMP1.

It is found in the mitochondrion inner membrane. The catalysed reaction is 4 Fe(II)-[cytochrome c] + O2 + 8 H(+)(in) = 4 Fe(III)-[cytochrome c] + 2 H2O + 4 H(+)(out). Component of the cytochrome c oxidase, the last enzyme in the mitochondrial electron transport chain which drives oxidative phosphorylation. The respiratory chain contains 3 multisubunit complexes succinate dehydrogenase (complex II, CII), ubiquinol-cytochrome c oxidoreductase (cytochrome b-c1 complex, complex III, CIII) and cytochrome c oxidase (complex IV, CIV), that cooperate to transfer electrons derived from NADH and succinate to molecular oxygen, creating an electrochemical gradient over the inner membrane that drives transmembrane transport and the ATP synthase. Cytochrome c oxidase is the component of the respiratory chain that catalyzes the reduction of oxygen to water. Electrons originating from reduced cytochrome c in the intermembrane space (IMS) are transferred via the dinuclear copper A center (CU(A)) of subunit 2 and heme A of subunit 1 to the active site in subunit 1, a binuclear center (BNC) formed by heme A3 and copper B (CU(B)). The BNC reduces molecular oxygen to 2 water molecules using 4 electrons from cytochrome c in the IMS and 4 protons from the mitochondrial matrix. This is Cytochrome c oxidase subunit 2 (COX2) from Lachancea kluyveri (strain ATCC 58438 / CBS 3082 / BCRC 21498 / NBRC 1685 / JCM 7257 / NCYC 543 / NRRL Y-12651) (Yeast).